Reading from the N-terminus, the 205-residue chain is MNSYKHPLRVGVGGPVGSGKTALLEALCKAMRDTWQLAVVTNDIYTKEDQRILTEAGALAPERIVGVETGGCPHTAIREDASMNLAAVEALSEKFGNLDLIFVESGGDNLSATFSPELADLTIYVIDVAEGEKIPRKGGPGITKSDFLVINKTDLAPYVGASLEVMASDTQRMRGDRPWTFTNLKQGDGLSTIIAFLEDKGMLGK.

14 to 21 is a GTP binding site; sequence GPVGSGKT.

Homodimer. UreD, UreF and UreG form a complex that acts as a GTP-hydrolysis-dependent molecular chaperone, activating the urease apoprotein by helping to assemble the nickel containing metallocenter of UreC. The UreE protein probably delivers the nickel.

Its subcellular location is the cytoplasm. With respect to regulation, activation of apourease within the UreDFG-apoprotein complex is inhibited by zinc, copper and cobalt. Functionally, facilitates the functional incorporation of the urease nickel metallocenter. This process requires GTP hydrolysis, probably effectuated by UreG. This is Urease accessory protein UreG from Klebsiella aerogenes (Enterobacter aerogenes).